A 374-amino-acid polypeptide reads, in one-letter code: Organelle RRM domain-containing protein 1, chloroplastic (374 aa).

A chloroplast-targeting transit peptide spans 1 to 54 (MEALIASTSFFVPISNSSSSHIINNRFFPSFYSPNLNFGTFRKTSLSSSHLVFS). The span at 258–271 (KDYEGDSTQDSRDQ) shows a compositional bias: basic and acidic residues. Positions 258–279 (KDYEGDSTQDSRDQDDSESPPV) are disordered. Residues 282-360 (KKLFITGLSF…WMIVVDVAKT (79 aa)) form the RRM domain.

In terms of assembly, interacts with PCMP-H51/CRR28 and PCMP-H12/OTP82. Interacts with MORF8/RIP1, MORF2/RIP2 and VAR3/OZ1.

The protein resides in the plastid. It is found in the chloroplast. Its function is as follows. Involved in C-to-U editing of chloroplastic RNA. Functions as major chloroplastic editing factor. Controls 62 percent of the chloroplastic editing sites. Binds RNA close to ORRM1-dependent editing sites in vitro. Binds the editing recognition trans-factors PCMP-H51/CRR28 and PCMP-H12/OTP82. This is Organelle RRM domain-containing protein 1, chloroplastic from Arabidopsis thaliana (Mouse-ear cress).